Here is a 417-residue protein sequence, read N- to C-terminus: Serine hydroxymethyltransferase (417 aa).

Residues L112 and 116–118 each bind (6S)-5,6,7,8-tetrahydrofolate; that span reads GHL. K221 carries the N6-(pyridoxal phosphate)lysine modification. Position 247 (E247) interacts with (6S)-5,6,7,8-tetrahydrofolate.

Belongs to the SHMT family. As to quaternary structure, homodimer. The cofactor is pyridoxal 5'-phosphate.

It is found in the cytoplasm. The enzyme catalyses (6R)-5,10-methylene-5,6,7,8-tetrahydrofolate + glycine + H2O = (6S)-5,6,7,8-tetrahydrofolate + L-serine. It participates in one-carbon metabolism; tetrahydrofolate interconversion. It functions in the pathway amino-acid biosynthesis; glycine biosynthesis; glycine from L-serine: step 1/1. Catalyzes the reversible interconversion of serine and glycine with tetrahydrofolate (THF) serving as the one-carbon carrier. This reaction serves as the major source of one-carbon groups required for the biosynthesis of purines, thymidylate, methionine, and other important biomolecules. Also exhibits THF-independent aldolase activity toward beta-hydroxyamino acids, producing glycine and aldehydes, via a retro-aldol mechanism. The sequence is that of Serine hydroxymethyltransferase from Borrelia duttonii (strain Ly).